Reading from the N-terminus, the 136-residue chain is uncharacterized protein (136 aa).

This is an uncharacterized protein from Methanocaldococcus jannaschii (strain ATCC 43067 / DSM 2661 / JAL-1 / JCM 10045 / NBRC 100440) (Methanococcus jannaschii).